The sequence spans 306 residues: Curved DNA-binding protein (306 aa).

One can recognise a J domain in the interval 5 to 69; that stretch reads DYYAIMGVKP…QRRAEYDQMW (65 aa).

Its subcellular location is the cytoplasm. It is found in the nucleoid. Its function is as follows. DNA-binding protein that preferentially recognizes a curved DNA sequence. It is probably a functional analog of DnaJ; displays overlapping activities with DnaJ, but functions under different conditions, probably acting as a molecular chaperone in an adaptive response to environmental stresses other than heat shock. Lacks autonomous chaperone activity; binds native substrates and targets them for recognition by DnaK. Its activity is inhibited by the binding of CbpM. The polypeptide is Curved DNA-binding protein (Shigella boydii serotype 18 (strain CDC 3083-94 / BS512)).